The following is a 197-amino-acid chain: Peptidyl-tRNA hydrolase (197 aa).

Tyrosine 21 contacts tRNA. Residue histidine 26 is the Proton acceptor of the active site. Tyrosine 72, asparagine 74, and asparagine 120 together coordinate tRNA.

The protein belongs to the PTH family. As to quaternary structure, monomer.

The protein resides in the cytoplasm. The catalysed reaction is an N-acyl-L-alpha-aminoacyl-tRNA + H2O = an N-acyl-L-amino acid + a tRNA + H(+). In terms of biological role, hydrolyzes ribosome-free peptidyl-tRNAs (with 1 or more amino acids incorporated), which drop off the ribosome during protein synthesis, or as a result of ribosome stalling. Its function is as follows. Catalyzes the release of premature peptidyl moieties from peptidyl-tRNA molecules trapped in stalled 50S ribosomal subunits, and thus maintains levels of free tRNAs and 50S ribosomes. The protein is Peptidyl-tRNA hydrolase of Saccharophagus degradans (strain 2-40 / ATCC 43961 / DSM 17024).